Here is a 459-residue protein sequence, read N- to C-terminus: MSNRFAVILAAGKGTRMKSKLYKVLHPVCGKPMVQHVVNEVSQLGLQKLVTVVGHGAEKVQEQLGNVSEFALQAEQLGTAHAVDQAASVLANEEGTTLVICGDTPLITAETMEALLQQHEEAGAMATVLTAYIEEPAGYGRIVRNENGHVEKIVEHKDANEKELAIKEINTGTYCFDNKALFASLSKVSNDNVQGEYYLPDVIEILKNEGHIVSAYQTEHFDETLGVNDRVALSQAEIIMKNRINRKNMVNGVTIIDPSNTYISTDAVIGSDTVLHPGTVIEGNTVIGSDCEIGPHTVIRDSEIGDRTVIRQSTVHDSKLGTVVSVGPFAHIRPDSVIGDEVRVGNFVEIKKTVFGNRSKASHLSYIGDAQVGEDVNLGCGSITVNYDGKNKFKTVIGNGVFIGCNSNLVAPVTVEDGAYVAAGSTITENVPSKALSVARARQVNKEDYVDQLLNKKKS.

Positions 1–230 (MSNRFAVILA…FDETLGVNDR (230 aa)) are pyrophosphorylase. Residues 9-12 (LAAG), K23, Q73, and 78-79 (GT) each bind UDP-N-acetyl-alpha-D-glucosamine. D103 contacts Mg(2+). 4 residues coordinate UDP-N-acetyl-alpha-D-glucosamine: G140, E155, N170, and N228. Residue N228 participates in Mg(2+) binding. A linker region spans residues 231 to 251 (VALSQAEIIMKNRINRKNMVN). An N-acetyltransferase region spans residues 252 to 459 (GVTIIDPSNT…VDQLLNKKKS (208 aa)). 2 residues coordinate UDP-N-acetyl-alpha-D-glucosamine: R333 and K351. The Proton acceptor role is filled by H363. Residues Y366 and N377 each coordinate UDP-N-acetyl-alpha-D-glucosamine. Residues 386–387 (NY), A423, and R440 contribute to the acetyl-CoA site.

This sequence in the N-terminal section; belongs to the N-acetylglucosamine-1-phosphate uridyltransferase family. In the C-terminal section; belongs to the transferase hexapeptide repeat family. In terms of assembly, homotrimer. Requires Mg(2+) as cofactor.

The protein resides in the cytoplasm. It carries out the reaction alpha-D-glucosamine 1-phosphate + acetyl-CoA = N-acetyl-alpha-D-glucosamine 1-phosphate + CoA + H(+). The catalysed reaction is N-acetyl-alpha-D-glucosamine 1-phosphate + UTP + H(+) = UDP-N-acetyl-alpha-D-glucosamine + diphosphate. It participates in nucleotide-sugar biosynthesis; UDP-N-acetyl-alpha-D-glucosamine biosynthesis; N-acetyl-alpha-D-glucosamine 1-phosphate from alpha-D-glucosamine 6-phosphate (route II): step 2/2. The protein operates within nucleotide-sugar biosynthesis; UDP-N-acetyl-alpha-D-glucosamine biosynthesis; UDP-N-acetyl-alpha-D-glucosamine from N-acetyl-alpha-D-glucosamine 1-phosphate: step 1/1. Its pathway is bacterial outer membrane biogenesis; LPS lipid A biosynthesis. Functionally, catalyzes the last two sequential reactions in the de novo biosynthetic pathway for UDP-N-acetylglucosamine (UDP-GlcNAc). The C-terminal domain catalyzes the transfer of acetyl group from acetyl coenzyme A to glucosamine-1-phosphate (GlcN-1-P) to produce N-acetylglucosamine-1-phosphate (GlcNAc-1-P), which is converted into UDP-GlcNAc by the transfer of uridine 5-monophosphate (from uridine 5-triphosphate), a reaction catalyzed by the N-terminal domain. The polypeptide is Bifunctional protein GlmU (Bacillus mycoides (strain KBAB4) (Bacillus weihenstephanensis)).